A 345-amino-acid polypeptide reads, in one-letter code: D-fructose 1,6-bisphosphatase class 2/sedoheptulose 1,7-bisphosphatase (345 aa).

Positions 33, 57, 97, and 100 each coordinate Mn(2+). Residues 100-102 (EGT), tyrosine 131, 176-178 (RPR), and 198-200 (DGD) each bind substrate. Position 225 (glutamate 225) interacts with Mn(2+).

The protein belongs to the FBPase class 2 family. Homotetramer. Requires Mn(2+) as cofactor.

The catalysed reaction is beta-D-fructose 1,6-bisphosphate + H2O = beta-D-fructose 6-phosphate + phosphate. It carries out the reaction D-sedoheptulose 1,7-bisphosphate + H2O = D-sedoheptulose 7-phosphate + phosphate. Its pathway is carbohydrate biosynthesis; Calvin cycle. Its function is as follows. Catalyzes the hydrolysis of fructose 1,6-bisphosphate (Fru 1,6-P2) and sedoheptulose 1,7-bisphosphate (Sed 1,7-P2) to fructose 6-phosphate and sedoheptulose 7-phosphate, respectively. The polypeptide is D-fructose 1,6-bisphosphatase class 2/sedoheptulose 1,7-bisphosphatase (Synechocystis sp. (strain ATCC 27184 / PCC 6803 / Kazusa)).